The sequence spans 182 residues: CDP-diacylglycerol--glycerol-3-phosphate 3-phosphatidyltransferase (182 aa).

Residues Met-1–Phe-12 are Cytoplasmic-facing. A helical membrane pass occupies residues Arg-13–Ile-37. The Periplasmic portion of the chain corresponds to Ile-38–Thr-60. A helical membrane pass occupies residues Arg-61–Leu-81. Residues Val-82 to Tyr-86 lie on the Cytoplasmic side of the membrane. The chain crosses the membrane as a helical span at residues His-87–Ser-107. The Periplasmic portion of the chain corresponds to Leu-108 to Pro-145. A helical membrane pass occupies residues Asp-146–Met-168. At Phe-169–Glu-181 the chain is on the cytoplasmic side.

The protein belongs to the CDP-alcohol phosphatidyltransferase class-I family.

The protein resides in the cell inner membrane. The enzyme catalyses a CDP-1,2-diacyl-sn-glycerol + sn-glycerol 3-phosphate = a 1,2-diacyl-sn-glycero-3-phospho-(1'-sn-glycero-3'-phosphate) + CMP + H(+). The protein operates within phospholipid metabolism; phosphatidylglycerol biosynthesis; phosphatidylglycerol from CDP-diacylglycerol: step 1/2. Its function is as follows. Catalyzes the conversion of cytidine diphosphate diacylglycerol (CDP-DG) and glycerol 3-phosphate into phosphatidylglycerol. Essential for the synthesis of anionic phospholipids, thereby playing a role in balancing the ratio of zwitterionic and anionic phospholipids, which is thought to be important for normal membrane function. The sequence is that of CDP-diacylglycerol--glycerol-3-phosphate 3-phosphatidyltransferase from Yersinia pestis bv. Antiqua (strain Antiqua).